Here is an 842-residue protein sequence, read N- to C-terminus: Pentatricopeptide repeat-containing protein At3g22690 (842 aa).

16 PPR repeats span residues 98 to 132, 133 to 167, 168 to 202, 203 to 234, 235 to 269, 270 to 300, 301 to 335, 336 to 370, 371 to 401, 402 to 436, 437 to 463, 469 to 503, 504 to 534, 535 to 569, 570 to 605, and 606 to 636; these read TCFM…GISP, DKYT…GYAK, DLFV…NVVS, WTSM…EVTP, NSVT…GIEV, NDLM…YGAS, NLDL…GVRP, DRIS…GFES, WDNI…MSNK, TVVT…NIVS, WNTI…MQSQ, DGVT…GIQL, DVRL…LTNR, DVSA…GLKP, DGVA…GVSP, and EDVH…MPME. Residues 641–716 are type E motif; it reads IWNSLLAACR…PPGTSSIQIR (76 aa). The tract at residues 717-747 is type E(+) motif; the sequence is GKTHEFTSGDESHPEMPNIEAMLDEVSQRAS. Residues 748-842 form a type DYW motif region; sequence HLGHVPDLSN…QGKCSCGDFW (95 aa).

The protein belongs to the PPR family. PCMP-H subfamily.

The chain is Pentatricopeptide repeat-containing protein At3g22690 (PCMP-H56) from Arabidopsis thaliana (Mouse-ear cress).